The primary structure comprises 113 residues: Cholecystoxin (113 aa).

Residues 1–20 (MYGGICLCVLLAVLAISSSG) form the signal peptide. A propeptide spanning residues 21–79 (QHISRSLNGNSLAAAIEQNFPEKHRPARTPDSNQRVESNIDEKANLGVLLARYLQKARR) is cleaved from the precursor. The interval 77-97 (ARRGTNGKPPDPKKESQDYLG) is disordered. The residue at position 95 (Y95) is a Sulfotyrosine. F101 carries the phenylalanine amide modification. Positions 102 to 113 (GRRSAEEYEYSS) are excised as a propeptide.

The protein belongs to the gastrin/cholecystokinin family. In terms of tissue distribution, expressed by the mandibular venom gland.

It localises to the secreted. Its function is as follows. Cholecystokinin-22: hypotensive neuropeptide that binds cholecystokinin receptor type A receptor (CCKAR). In terms of biological role, cholecystokinin-8: hypotensive neuropeptide that binds cholecystokinin receptor type A receptor (CCKAR). This is Cholecystoxin from Varanus varius (Lace monitor lizard).